Consider the following 418-residue polypeptide: Synaptotagmin-15 (418 aa).

Over 1-4 the chain is Extracellular; that stretch reads MAEQ. Residues 5–27 form a helical; Signal-anchor for type III membrane protein membrane-spanning segment; that stretch reads LAFLIGGIIGGLLLLIGVSCCLW. The Cytoplasmic portion of the chain corresponds to 28–418; sequence RRFCATFTYE…WHALCRPTEP (391 aa). C2 domains lie at 144 to 261 and 275 to 396; these read CLGR…HRII and EFGD…EHWG.

This sequence belongs to the synaptotagmin family. As to quaternary structure, homodimer. As to expression, isoform 1 and isoform 2 are expressed in heart, lung, skeletal muscle and testis; not detected in brain, liver and kidney. Isoform 1 is expressed in spleen.

Its subcellular location is the membrane. Functionally, may be involved in the trafficking and exocytosis of secretory vesicles in non-neuronal tissues. The chain is Synaptotagmin-15 (Syt15) from Mus musculus (Mouse).